Here is a 361-residue protein sequence, read N- to C-terminus: MDPLRQSPSPSSSRASSPRTLSCERLGYVGIEAVLDQLKIKAMKMGFEFNIMVVGQSGLGKSTMVNTLFKSKIWKSTMPGLRVPMPQTLQLHYVTHVIEENGVKLKLTVTDTPGFGDQINNDKCWDPILGYINEQYERYLQEEILITRQRHIPDTRVHCCIYFVPPTGHCLRPLDLEFLQRLCRAVNVVPVIARADSLTIEEREAFRHRIQDDLKTHSIEVYPQKSFDEDVNDKILNSKIRERIPFAVVGADREHMVNGRCVLGRKTKWGIIEVENMAHCEFPLLRDLLIRSHLQDLKDITHNVHYENYRIIRLKESHALPQGPGWVNLAPAPPPAPTGTRASPGPAKMCRWAEDNSDEDF.

The region spanning 45 to 316 (MGFEFNIMVV…ENYRIIRLKE (272 aa)) is the Septin-type G domain. The interval 45 to 318 (MGFEFNIMVV…YRIIRLKESH (274 aa)) is interaction with SEPTIN7. Residues 55-62 (GQSGLGKS) form a G1 motif region. Residues 55–62 (GQSGLGKS), threonine 88, glycine 114, 194–202 (RADSLTIEE), glycine 250, and arginine 265 each bind GTP. The interval 111–114 (DTPG) is G3 motif. Residues 193–196 (ARAD) form a G4 motif region. A self-association (via N-terminus) to polymerize octameric septin 12-7-6-2/4-2/4-6-7-12 filaments region spans residues 257-361 (VNGRCVLGRK…WAEDNSDEDF (105 aa)). Residues 333 to 361 (PPPAPTGTRASPGPAKMCRWAEDNSDEDF) are disordered. The span at 338-347 (TGTRASPGPA) shows a compositional bias: low complexity.

This sequence belongs to the TRAFAC class TrmE-Era-EngA-EngB-Septin-like GTPase superfamily. Septin GTPase family. Septins polymerize into heterooligomeric protein complexes that form filaments, and can associate with cellular membranes, actin filaments and microtubules. GTPase activity is required for filament formation. Interacts with SEPTIN6 and SEPTIN11. Component of a octameric complex consisting of SEPTIN12, SEPTIN7, SEPTIN6 and SEPTIN2 or SEPTIN4 in the order 12-7-6-2-2-6-7-12 or 12-7-6-4-4-6-7-12 and located in the sperm annulus; the octamer polymerizes into filaments via the SEPTIN12 N- and C-termini; the SEPTIN12:SEPTIN7 association is mediated by the GTP-binding domains. Interacts with SPAG4 and LMNB1. Associates with alpha- and beta-tubulins.

Its subcellular location is the cytoplasm. The protein localises to the cytoskeleton. It is found in the spindle. It localises to the cell projection. The protein resides in the cilium. Its subcellular location is the flagellum. In terms of biological role, filament-forming cytoskeletal GTPase. May play a role in cytokinesis (Potential). Involved in spermatogenesis. Involved in the morphogenesis of sperm heads and the elongation of sperm tails probably implicating the association with alpha- and beta-tubulins. Forms a filamentous structure with SEPTIN7, SEPTIN6, SEPTIN2 and probably SEPTIN4 at the sperm annulus which is required for the structural integrity and motility of the sperm tail during postmeiotic differentiation. In Bos taurus (Bovine), this protein is Septin-12.